Here is a 159-residue protein sequence, read N- to C-terminus: Cyclic pyranopterin monophosphate synthase (159 aa).

Substrate-binding positions include 75-77 (LCH) and 113-114 (ME). Asp128 is an active-site residue.

The protein belongs to the MoaC family. As to quaternary structure, homohexamer; trimer of dimers.

It catalyses the reaction (8S)-3',8-cyclo-7,8-dihydroguanosine 5'-triphosphate = cyclic pyranopterin phosphate + diphosphate. The protein operates within cofactor biosynthesis; molybdopterin biosynthesis. Catalyzes the conversion of (8S)-3',8-cyclo-7,8-dihydroguanosine 5'-triphosphate to cyclic pyranopterin monophosphate (cPMP). This Cupriavidus metallidurans (strain ATCC 43123 / DSM 2839 / NBRC 102507 / CH34) (Ralstonia metallidurans) protein is Cyclic pyranopterin monophosphate synthase.